The primary structure comprises 1122 residues: Histidine kinase CKI1 (1122 aa).

The Cytoplasmic segment spans residues 1–12; that stretch reads MMVKVTKLVASR. Residues 13 to 33 form a helical membrane-spanning segment; it reads PIVVFCVLAFLVVVFECIWIS. Topologically, residues 34–345 are extracellular; it reads NWRTTTENLV…KHQAEKAKYQ (312 aa). Residues 346–366 traverse the membrane as a helical segment; sequence LIVVMIFLGFGWPVWFVWFMM. Over 367–1122 the chain is Cytoplasmic; the sequence is QATRREMHMR…VIREIESKRH (756 aa). The Histidine kinase domain maps to 402–671; it reads NASHDIRGAL…CFQFNVLLTT (270 aa). A Phosphohistidine; by autocatalysis modification is found at His-405. The span at 918-928 shows a compositional bias: basic and acidic residues; the sequence is AERSPKHKVQE. Positions 918 to 981 are disordered; the sequence is AERSPKHKVQ…QETSKPSDDE (64 aa). Residues 987–1120 enclose the Response regulatory domain; that stretch reads RVLVVDDNFI…ANVIREIESK (134 aa). Asp-1050 carries the post-translational modification 4-aspartylphosphate.

As to quaternary structure, homodimer. Interacts with AHP2 and AHP3. As to expression, expressed in vascular tissues of inflorescence stems and floral organs, especially in procambium cells, and in siliques.

The protein localises to the cell membrane. The enzyme catalyses ATP + protein L-histidine = ADP + protein N-phospho-L-histidine.. Functionally, essential protein. Functions as a histidine kinase and transmits the stress signal to a downstream MAPK cascade. This protein undergoes an ATP-dependent autophosphorylation at a conserved histidine residue in the kinase core, and a phosphoryl group is then transferred to a conserved aspartate residue in the receiver domain. Required for the development of megagametophyte in female gametophyte (embryo sac) independently of cytokinin. Contributes to vascular bundle formation and secondary growth in a cytokinin-independent manner, probably by promoting the maintenance of mitotic activity and/or identity of procambial cells. Seems to influence and promote the cytokinin signaling pathway. This is Histidine kinase CKI1 (CKI1) from Arabidopsis thaliana (Mouse-ear cress).